The chain runs to 357 residues: MAELQEVQITEEKPLLPGQTPEAAKTHSVETPYGSVTFTVYGTPKPKRPAILTYHDVGLNYKSCFQPLFQFEDMQEIIQNFVRVHVDAPGMEEGAPVFPLGYQYPSLDQLADMIPCVLQYLNFSTIIGVGVGAGAYILARYALNHPDTVEGLVLINIDPNAKRWMDWAAHKLTGLTSSIPEMILGHLFSQEELSGNSELIQKYRNIITHAPNLDNIELYWNSYNNRRDLNFERGGDITLKCPVMLVVGDQAPHEDAVVECNSKLDPTQTSFLKMADSGGQPQLTQPGKLTEAFKYFLQGMGYMASSCMTRLSRSRTASLTSAASVDGNRSRSRTLSQSSESGTLSSGPPGHTMEVSC.

The tract at residues 1–28 (MAELQEVQITEEKPLLPGQTPEAAKTHS) is disordered. Alanine 2 is subject to N-acetylalanine. Threonine 20 is modified (phosphothreonine). Phosphoserine is present on residues serine 312 and serine 314. Residue threonine 316 is modified to Phosphothreonine. Position 318 is a phosphoserine (serine 318). Threonine 320 is subject to Phosphothreonine. Residues 320–357 (TSAASVDGNRSRSRTLSQSSESGTLSSGPPGHTMEVSC) are disordered. A phosphoserine mark is found at serine 321, serine 324, and serine 330. The segment covering 333 to 347 (RTLSQSSESGTLSSG) has biased composition (low complexity). Threonine 334 is modified (phosphothreonine). Residues serine 336, serine 338, serine 339, and serine 341 each carry the phosphoserine modification. Phosphothreonine is present on threonine 343. A Phosphoserine modification is found at serine 356.

This sequence belongs to the NDRG family. Interacts with CTNNB1.

It is found in the cytoplasm. Its subcellular location is the perinuclear region. It localises to the cell projection. The protein localises to the growth cone. Contributes to the regulation of the Wnt signaling pathway. Down-regulates CTNNB1-mediated transcriptional activation of target genes, such as CCND1, and may thereby act as tumor suppressor. May be involved in dendritic cell and neuron differentiation. The chain is Protein NDRG2 (NDRG2) from Pan troglodytes (Chimpanzee).